Consider the following 258-residue polypeptide: MPETPLMRDNGPVNHADQDAPAVPEEGQTKDSKGSRLHPRVTSFRSRRGALTVAQQESWDRQWPRIGADVSDHRLDAPSWFGRDAPLILEIGSGTGTATAAMAKAEPHVNLMAVEVYRPGLAQLLQQIERDEIPNIRVLRGDAMDVLENMIEPESLTGVRVFFPDPWPKARHHKRRLLQSPTFALIASRLKAGGVLHVATDHAEYAEAIAEAGNAEPLLTSLDWESPMTHERPVTKFEDKAHQVGSAITELIWGKIRS.

The interval 1 to 42 (MPETPLMRDNGPVNHADQDAPAVPEEGQTKDSKGSRLHPRVT) is disordered. E90, E115, D142, and D165 together coordinate S-adenosyl-L-methionine. Residue D165 is part of the active site. Substrate is bound by residues K169, D201, and 235-238 (TKFE).

Belongs to the class I-like SAM-binding methyltransferase superfamily. TrmB family.

It carries out the reaction guanosine(46) in tRNA + S-adenosyl-L-methionine = N(7)-methylguanosine(46) in tRNA + S-adenosyl-L-homocysteine. It participates in tRNA modification; N(7)-methylguanine-tRNA biosynthesis. Catalyzes the formation of N(7)-methylguanine at position 46 (m7G46) in tRNA. The protein is tRNA (guanine-N(7)-)-methyltransferase of Rhodococcus jostii (strain RHA1).